The primary structure comprises 546 residues: Thermosome subunit beta (546 aa).

This sequence belongs to the TCP-1 chaperonin family. Forms a Heterooligomeric complex of two stacked eight-membered rings.

In terms of biological role, molecular chaperone; binds unfolded polypeptides in vitro, and has a weak ATPase activity. In Thermococcus kodakarensis (strain ATCC BAA-918 / JCM 12380 / KOD1) (Pyrococcus kodakaraensis (strain KOD1)), this protein is Thermosome subunit beta (thsB).